Consider the following 202-residue polypeptide: MVGAVTQIADRPTDPSPWSPRETELLAVTLRLLQEHGYDRLTVDAVAASARASKATVYRRWPSKAELVLAAFIEGIRQVAVPPNTGNLRDDLLRLGELICREVGQHASTIRAVLVEVSRNPALNDVLQHQFVDHRKALIQYILQQAVDRGEISSAAISDELWDLLPGYLIFRSIIPNRPPTQDTVQALVDDVILPSLTRSTG.

The disordered stretch occupies residues 1 to 20 (MVGAVTQIADRPTDPSPWSP). Residues 19 to 79 (SPRETELLAV…AAFIEGIRQV (61 aa)) enclose the HTH tetR-type domain.

This is an uncharacterized protein from Mycobacterium bovis (strain ATCC BAA-935 / AF2122/97).